Consider the following 100-residue polypeptide: Small ribosomal subunit protein bS18c (100 aa).

A compositionally biased stretch (basic residues) spans 1-19; sequence MDKSKRPFRKSKRSFRRRL. Residues 1–23 form a disordered region; it reads MDKSKRPFRKSKRSFRRRLPPIG.

It belongs to the bacterial ribosomal protein bS18 family. In terms of assembly, part of the 30S ribosomal subunit.

It is found in the plastid. It localises to the chloroplast. This Calycanthus floridus var. glaucus (Eastern sweetshrub) protein is Small ribosomal subunit protein bS18c.